We begin with the raw amino-acid sequence, 333 residues long: Adenosine deaminase (333 aa).

Zn(2+)-binding residues include His-12 and His-14. The substrate site is built by His-14, Asp-16, and Gly-170. His-197 is a binding site for Zn(2+). Glu-200 acts as the Proton donor in catalysis. Asp-278 is a Zn(2+) binding site. Asp-279 contacts substrate.

It belongs to the metallo-dependent hydrolases superfamily. Adenosine and AMP deaminases family. Adenosine deaminase subfamily. The cofactor is Zn(2+).

The catalysed reaction is adenosine + H2O + H(+) = inosine + NH4(+). The enzyme catalyses 2'-deoxyadenosine + H2O + H(+) = 2'-deoxyinosine + NH4(+). Catalyzes the hydrolytic deamination of adenosine and 2-deoxyadenosine. The polypeptide is Adenosine deaminase (Escherichia coli (strain SE11)).